The sequence spans 320 residues: Phosphate acyltransferase (320 aa).

The protein belongs to the PlsX family. In terms of assembly, homodimer. Probably interacts with PlsY.

It is found in the cytoplasm. It carries out the reaction a fatty acyl-[ACP] + phosphate = an acyl phosphate + holo-[ACP]. It participates in lipid metabolism; phospholipid metabolism. Catalyzes the reversible formation of acyl-phosphate (acyl-PO(4)) from acyl-[acyl-carrier-protein] (acyl-ACP). This enzyme utilizes acyl-ACP as fatty acyl donor, but not acyl-CoA. The polypeptide is Phosphate acyltransferase (Syntrophomonas wolfei subsp. wolfei (strain DSM 2245B / Goettingen)).